A 173-amino-acid chain; its full sequence is MNKFATLAVIFCACIVGSCYANYGGQQSYGQRSYGQDSSAASAASSAAAAGAEGQQRYERPVEIIAGGYRGSYAPEILRPIQVSGGYGGERRGYNGGNYRRAGYGPRWTVQPAGATLLYPGQNNYKAYVSPPEYSKVILPIRPAAPVAKLFVPENQYGNQYVSQYSAPRSSGY.

Residues 1–21 form the signal peptide; that stretch reads MNKFATLAVIFCACIVGSCYA.

This sequence belongs to the chorion protein S19 family.

The protein localises to the secreted. In terms of biological role, chorion membrane (egg shell) protein; plays a role in protecting the egg from the environment. The protein is Chorion protein S19 (Cp19) of Drosophila melanogaster (Fruit fly).